We begin with the raw amino-acid sequence, 518 residues long: Integrator complex subunit 14 (518 aa).

The VWFA domain maps to 2–204 (PTVVVMDVSL…KNVQSMFGKL (203 aa)). Residues Ser10, Ser12, and Thr86 each contribute to the Mg(2+) site. An N6-acetyllysine modification is found at Lys418.

Belongs to the Integrator subunit 14 family. As to quaternary structure, component of the Integrator complex, composed of core subunits INTS1, INTS2, INTS3, INTS4, INTS5, INTS6, INTS7, INTS8, INTS9/RC74, INTS10, INTS11/CPSF3L, INTS12, INTS13, INTS14 and INTS15. The core complex associates with protein phosphatase 2A subunits PPP2CA and PPP2R1A, to form the Integrator-PP2A (INTAC) complex. INTS14 is part of the tail subcomplex, composed of INTS10, INTS13, INTS14 and INTS15. In terms of tissue distribution, strongly expressed in numerous cancer cells compared with their non-cancerous counterparts (lung, prostate, colon, stomach and skin).

The protein resides in the nucleus. Functionally, component of the integrator complex, a multiprotein complex that terminates RNA polymerase II (Pol II) transcription in the promoter-proximal region of genes. The integrator complex provides a quality checkpoint during transcription elongation by driving premature transcription termination of transcripts that are unfavorably configured for transcriptional elongation: the complex terminates transcription by (1) catalyzing dephosphorylation of the C-terminal domain (CTD) of Pol II subunit POLR2A/RPB1 and SUPT5H/SPT5, (2) degrading the exiting nascent RNA transcript via endonuclease activity and (3) promoting the release of Pol II from bound DNA. The integrator complex is also involved in terminating the synthesis of non-coding Pol II transcripts, such as enhancer RNAs (eRNAs), small nuclear RNAs (snRNAs), telomerase RNAs and long non-coding RNAs (lncRNAs). Within the integrator complex, INTS14 is part of the integrator tail module that acts as a platform for the recruitment of transcription factors at promoters. The protein is Integrator complex subunit 14 of Homo sapiens (Human).